Reading from the N-terminus, the 262-residue chain is MALNKNHSEGGGVIVNNTESILMSYDHVELTFNDMKNVPEAFKGTKKGTVYLTPYRVIFLSKGKDAMRSFMMPFYLMKDCEVKQPVFGANFIKGTVKAEAGGGWEGSASYKLTFTAGGAIEFGQQMLQVASQASRGEVPNGAYGYPYMPSGAYVFPPPVANGMYPCPPGYPYPPPPPEFYPGPPMMDGAMGYVQPPPPPYPGPMEPPVVSGPSAPPTPAAEAKAAEAAASAYYNPGNPHNVYMPTSQPPPPPYYPPEDKKTQ.

The GRAM domain maps to 1 to 84 (MALNKNHSEG…YLMKDCEVKQ (84 aa)). Tyr-192 carries the post-translational modification Phosphotyrosine. The PPxY motif 1 signature appears at 196 to 200 (PPPPY). Residues 197-206 (PPPYPGPMEP) show a composition bias toward pro residues. The interval 197-262 (PPPYPGPMEP…YYPPEDKKTQ (66 aa)) is disordered. Low complexity predominate over residues 219–231 (AAEAKAAEAAASA). Tyr-232 is modified (phosphotyrosine). Residues 246–255 (SQPPPPPYYP) show a composition bias toward pro residues. A PPxY motif 2 motif is present at residues 249–253 (PPPPY).

In terms of assembly, binds to the WW domain of YAP1, WWP1 and WWP2. Interacts with NEDD4. Interacts with ESR1 and UBE3A. Phosphorylated in repsonse to EGF as well as estrogen and progesterone hormones. Tyr-192 and Tyr-232 are phosphorylated by YES and SRC inducing nuclear translocation.

The protein resides in the cytoplasm. It localises to the nucleus. Functionally, acts as a transcriptional coactivator of estrogen and progesterone receptors (ESR1 and PGR) upon hormone activation. In presence of estrogen, binds to ESR1-responsive promoters. Synergizes with YAP1 to enhance PGR activity. Modulates expression of post-synaptic scaffolding proteins via regulation of ESR1, ESR2 and PGR. The polypeptide is WW domain-binding protein 2 (Wbp2) (Rattus norvegicus (Rat)).